A 581-amino-acid polypeptide reads, in one-letter code: Putative aluminum-activated malate transporter 3 (581 aa).

6 helical membrane passes run 98–118 (MGLA…GLEL), 122–142 (YLWA…ATFS), 148–164 (GLGT…MSWI), 167–187 (MTGN…AFFA), 201–218 (YGFR…VSGY), and 231–251 (FLLI…IYPI).

It belongs to the aromatic acid exporter (TC 2.A.85) family.

Its subcellular location is the membrane. Functionally, malate transporter. This Arabidopsis thaliana (Mouse-ear cress) protein is Putative aluminum-activated malate transporter 3 (ALMT3).